The chain runs to 343 residues: 3-oxopimeloyl-[acyl-carrier-protein] synthase (343 aa).

Active-site residues include Cys-132 and His-272. An ACP-binding region spans residues 273-277 (QANHR). The active site involves Asn-302.

Belongs to the thiolase-like superfamily. BioZ family.

It catalyses the reaction malonyl-[ACP] + an acyl-CoA + H(+) = a 3-oxoacyl-[ACP] + CO2 + CoA. The enzyme catalyses glutaryl-CoA + malonyl-[ACP] + H(+) = 3-oxo-6-carboxyhexanoyl-[ACP] + CO2 + CoA. It participates in cofactor biosynthesis; biotin biosynthesis. Functionally, involved in the formation of the biotin precursor pimeloyl-ACP. Catalyzes the condensation of glutaryl-CoA, an intermediate in lysine degradation, with malonyl-ACP to produce 3-oxopimeloyl-ACP. The polypeptide is 3-oxopimeloyl-[acyl-carrier-protein] synthase (Rhodothermus marinus (strain ATCC 43812 / DSM 4252 / R-10) (Rhodothermus obamensis)).